The sequence spans 524 residues: Bifunctional methyltransferase (524 aa).

The hemK stretch occupies residues Met1–Pro306. The tract at residues Met1 to Asn308 is RF MTase. Residues Gly146–Gly150, Asp169, Trp198, Asn213, Glu353, Glu378, Asn405, and Asp427 each bind S-adenosyl-L-methionine. Asn213–Tyr216 contributes to the substrate binding site. The segment at Ile307–His524 is tRNA (guanine-N(7)-)-methyltransferase. The segment at Arg311–His524 is tRNA MTase. The active site involves Asp427. Residues Lys431 and Asp463 each contribute to the substrate site.

The protein in the C-terminal section; belongs to the class I-like SAM-binding methyltransferase superfamily. TrmB family. It in the N-terminal section; belongs to the protein N5-glutamine methyltransferase family. PrmC subfamily.

It catalyses the reaction L-glutaminyl-[peptide chain release factor] + S-adenosyl-L-methionine = N(5)-methyl-L-glutaminyl-[peptide chain release factor] + S-adenosyl-L-homocysteine + H(+). The catalysed reaction is guanosine(46) in tRNA + S-adenosyl-L-methionine = N(7)-methylguanosine(46) in tRNA + S-adenosyl-L-homocysteine. Its function is as follows. Methylates the class 1 translation termination release factors RF1/PrfA and RF2/PrfB on the glutamine residue of the universally conserved GGQ motif. Functionally, catalyzes the formation of N(7)-methylguanine at position 46 (m7G46) in tRNA. This is Bifunctional methyltransferase (prmC/trmB) from Rickettsia conorii (strain ATCC VR-613 / Malish 7).